The chain runs to 223 residues: Ubiquitin carboxyl-terminal hydrolase isozyme L1 (223 aa).

Met-1 carries the post-translational modification N-acetylmethionine. One can recognise a UCH catalytic domain in the interval 2–221 (QLKPMEINPE…VRFSAVALCK (220 aa)). Residues 5 to 10 (PMEINP) form an interaction with ubiquitin region. Cys-90 functions as the Nucleophile in the catalytic mechanism. Phosphoserine is present on Ser-125. His-161 acts as the Proton donor in catalysis. The interval 211–216 (EVRFSA) is interaction with ubiquitin. Cys-220 is lipidated: S-farnesyl cysteine. Residues 221-223 (KAA) constitute a propeptide, removed in mature form.

This sequence belongs to the peptidase C12 family. In terms of assembly, monomer. Homodimer. Interacts with COPS5 and SNCA. Post-translationally, O-glycosylated.

It localises to the cytoplasm. It is found in the endoplasmic reticulum membrane. It catalyses the reaction Thiol-dependent hydrolysis of ester, thioester, amide, peptide and isopeptide bonds formed by the C-terminal Gly of ubiquitin (a 76-residue protein attached to proteins as an intracellular targeting signal).. Ubiquitin-protein hydrolase involved both in the processing of ubiquitin precursors and of ubiquitinated proteins. This enzyme is a thiol protease that recognizes and hydrolyzes a peptide bond at the C-terminal glycine of ubiquitin. Also binds to free monoubiquitin and may prevent its degradation in lysosomes. The homodimer may have ATP-independent ubiquitin ligase activity. In Equus caballus (Horse), this protein is Ubiquitin carboxyl-terminal hydrolase isozyme L1 (UCHL1).